A 333-amino-acid polypeptide reads, in one-letter code: tRNA N6-adenosine threonylcarbamoyltransferase (333 aa).

2 residues coordinate Fe cation: H110 and H114. Residues 133–137 (IVSGG), D166, G179, D183, and N275 contribute to the substrate site. D302 serves as a coordination point for Fe cation.

Belongs to the KAE1 / TsaD family. Fe(2+) is required as a cofactor.

The protein localises to the cytoplasm. It catalyses the reaction L-threonylcarbamoyladenylate + adenosine(37) in tRNA = N(6)-L-threonylcarbamoyladenosine(37) in tRNA + AMP + H(+). Required for the formation of a threonylcarbamoyl group on adenosine at position 37 (t(6)A37) in tRNAs that read codons beginning with adenine. Is involved in the transfer of the threonylcarbamoyl moiety of threonylcarbamoyl-AMP (TC-AMP) to the N6 group of A37, together with TsaE and TsaB. TsaD likely plays a direct catalytic role in this reaction. This chain is tRNA N6-adenosine threonylcarbamoyltransferase, found in Thermodesulfovibrio yellowstonii (strain ATCC 51303 / DSM 11347 / YP87).